Consider the following 22-residue polypeptide: Chymotrypsin inhibitor (22 aa).

Residues F1–A22 are disordered.

In terms of tissue distribution, hemolymph.

The protein localises to the secreted. The protein resides in the extracellular space. Inhibits chymotrypsin stoichiometrically. Also inhibits porcine pancreatic elastase and trypsin. This is Chymotrypsin inhibitor from Mythimna unipuncta (Armyworm moth).